The sequence spans 159 residues: bZIP transcription factor 11 (159 aa).

Residues 1–21 are compositionally biased toward low complexity; that stretch reads MESSSSGTTSSTIQTSSGSEE. The interval 1–47 is disordered; that stretch reads MESSSSGTTSSTIQTSSGSEESLMEQRKRKRMLSNRESARRSRMKKQ. The 64-residue stretch at 25–88 folds into the bZIP domain; that stretch reads EQRKRKRMLS…LTVEAENSVL (64 aa). Residues 27 to 48 are basic motif; that stretch reads RKRKRMLSNRESARRSRMKKQK. The segment at 53–67 is leucine-zipper; sequence LTAQVNHLKKENTEI.

Forms heterodimers with BZIP1, BZIP9, BZIP10, BZIP25 and BZIP63. Interacts with ADA2B. Highly expressed in stems and flowers. Expressed in root tips, cotyledons, leaf vasculature, embryos, apical parts of siliques and funiculi.

The protein resides in the nucleus. Its function is as follows. Transcription factor that binds to the DNA sequence 5'-ACTCAT-3' in target gene promoters. Promotes POX1/PRODH1 expression in response to hypoosmolarity stress. Positively regulates the expression of ASN1 and POX2/PRODH2 genes, which are involved in amino acid metabolism. Regulates several metabolic pathways such as myo-inositol, raffinose and trehalose. Regulates several trehalose metabolism genes, including TRE1, TPP5 and TPP6. Mediates recruitment of the histone acetylation machinery to activate auxin-induced transcription. Interacts with ADA2B adapter protein to promote ADA2B-mediated recruitment of SAGA-like histone acetyltransferase complexes to specific auxin-responsive genes. This is bZIP transcription factor 11 from Arabidopsis thaliana (Mouse-ear cress).